The sequence spans 564 residues: Kelch-like protein 12 (564 aa).

One can recognise a BTB domain in the interval 29–96; it reads CDVTLRVNLK…VYTETVHVTV (68 aa). In terms of domain architecture, BACK spans 131–232; it reads CLGIRDFAET…LTPRYITDVI (102 aa). 6 Kelch repeats span residues 278 to 325, 327 to 375, 376 to 422, 423 to 469, 471 to 516, and 518 to 563; these read VLLV…SLGD, VYVI…TLGD, MIYV…VANG, VIYC…LLND, IYVV…VLRG, and LYAI…VLRE.

As to quaternary structure, component of the BCR(KLHL12) E3 ubiquitin ligase complex.

The protein resides in the cytoplasmic vesicle. It localises to the COPII-coated vesicle. The protein operates within protein modification; protein ubiquitination. In terms of biological role, substrate-specific adapter of a BCR (BTB-CUL3-RBX1) E3 ubiquitin ligase complex that acts as a negative regulator of Wnt signaling pathway and ER-Golgi transport. The BCR(KLHL12) complex is involved in ER-Golgi transport by regulating the size of COPII coats, thereby playing a key role in collagen export, which is required for embryonic stem (ES) cells division. This is Kelch-like protein 12 (klhl12) from Xenopus laevis (African clawed frog).